Reading from the N-terminus, the 955-residue chain is UvrABC system protein A (955 aa).

35–42 (GLSGSGKS) lines the ATP pocket. ABC transporter domains are found at residues 322-601 (WGST…EESI) and 621-951 (GHDN…RYLK). 654–661 (GVSGSGKS) serves as a coordination point for ATP. Residues 754-780 (CEACQGDGLIKIEMHFLPDVYVKCDIC) form a C4-type zinc finger.

The protein belongs to the ABC transporter superfamily. UvrA family. Forms a heterotetramer with UvrB during the search for lesions.

Its subcellular location is the cytoplasm. Its function is as follows. The UvrABC repair system catalyzes the recognition and processing of DNA lesions. UvrA is an ATPase and a DNA-binding protein. A damage recognition complex composed of 2 UvrA and 2 UvrB subunits scans DNA for abnormalities. When the presence of a lesion has been verified by UvrB, the UvrA molecules dissociate. The chain is UvrABC system protein A from Rickettsia felis (strain ATCC VR-1525 / URRWXCal2) (Rickettsia azadi).